The chain runs to 381 residues: MKYELQTTDGRARRGRLIFERGVVETPAFMPVGTYGTVKGMTPEEVKDTGAQILLGNTFHLWLRPGQEIMKLHGDLHDFMQWHGPILTDSGGFQVFSLGDIRKITEQGVHFRNPINGDSIFLSPEKSMEIQHDLGSDIVMIFDECTPYPADWDYAKRSMEMSLRWAKRSRQRFDELENKNALFGIIQGSVYEDLRDVSVKGLVDIGFDGYAVGGLAVGEPKEDMHRILEHVCPQIPEDKPRYLMGVGKPEDLVEGVRRGVDMFDCVMPTRNARNGHLFVTDGVVKIRNAKYKDDVSPLDEHCDCYTCRNYSRAYLHHLDRCNEILGARLNTIHNLRYYQRLMAGLRQAIEEGKLEHFVVDFYQRIGKPIPPLAEKDVAAGN.

D89 serves as the catalytic Proton acceptor. Substrate is bound by residues 89-93 (DSGGF), D143, Q187, and G214. The tract at residues 245-251 (GVGKPED) is RNA binding. D264 serves as the catalytic Nucleophile. An RNA binding; important for wobble base 34 recognition region spans residues 269–273 (TRNAR). Residues C302, C304, C307, and H333 each contribute to the Zn(2+) site.

This sequence belongs to the queuine tRNA-ribosyltransferase family. As to quaternary structure, homodimer. Within each dimer, one monomer is responsible for RNA recognition and catalysis, while the other monomer binds to the replacement base PreQ1. Zn(2+) is required as a cofactor.

The catalysed reaction is 7-aminomethyl-7-carbaguanine + guanosine(34) in tRNA = 7-aminomethyl-7-carbaguanosine(34) in tRNA + guanine. Its pathway is tRNA modification; tRNA-queuosine biosynthesis. Its function is as follows. Catalyzes the base-exchange of a guanine (G) residue with the queuine precursor 7-aminomethyl-7-deazaguanine (PreQ1) at position 34 (anticodon wobble position) in tRNAs with GU(N) anticodons (tRNA-Asp, -Asn, -His and -Tyr). Catalysis occurs through a double-displacement mechanism. The nucleophile active site attacks the C1' of nucleotide 34 to detach the guanine base from the RNA, forming a covalent enzyme-RNA intermediate. The proton acceptor active site deprotonates the incoming PreQ1, allowing a nucleophilic attack on the C1' of the ribose to form the product. After dissociation, two additional enzymatic reactions on the tRNA convert PreQ1 to queuine (Q), resulting in the hypermodified nucleoside queuosine (7-(((4,5-cis-dihydroxy-2-cyclopenten-1-yl)amino)methyl)-7-deazaguanosine). This Pectobacterium carotovorum subsp. carotovorum (strain PC1) protein is Queuine tRNA-ribosyltransferase.